The sequence spans 84 residues: Figainin 2 (84 aa).

Residues 1-22 (MAFLKKSLFLVLFLGIVSLSVC) form the signal peptide. The span at 23–39 (EEEKREGEEKEEKREEE) shows a compositional bias: basic and acidic residues. Residues 23–53 (EEEKREGEEKEEKREEEEGKEENEDGNEEHK) form a disordered region. The propeptide occupies 23–54 (EEEKREGEEKEEKREEEEGKEENEDGNEEHKE). Residues 40-49 (EGKEENEDGN) show a composition bias toward acidic residues.

As to expression, expressed by the skin glands.

The protein resides in the secreted. Functionally, antimicrobial peptide that displays antibacterial, antiprotozoal, and antiviral activity. Exhibits antibacterial activity against the Gram-positive bacteria S.epidermidis ATCC 12228 (MIC=4 uM), E.casseliflavus ATCC 700327 (MIC=4 uM), S.aureus ATCC 25923 (MIC=8 uM) and E.faecalis ATCC 29212 (MIC=8 uM), and the Gram-negative bacteria E.coli ATCC 25922 (MIC=8 uM), K.pneumoniae ATCC 13883 (MIC=8 uM), the multi-resistant clinical isolate strain K.pneumoniae carbapanemase (KPC) MR (MIC=16 uM), and P.aeruginosa ATCC 27853 (MIC=32 uM). Displays antiprotozoal activity against the epimastigote form of T.cruzi (IC(50)=6.32 uM). Does not show antimicrobial against the fungi C.albicans ATCC 90028 and C.parapsilosis ATCC 22019. Displays antiviral activity against the human viruses chikungunya (EC(50)=17.9 uM), Dengue serotype 4 (EC(50)=20.8 uM) and Yellow Fever (EC(50)=21.8 uM). Shows moderate cytolytic activity against human erythrocytes (HC(50)=48.9 uM), and activates the oxidative burst in human neutrophils. Also displays anti-proliferative effects against MCF-7 breast cancer cells (IC(50)=15.3 uM) and B16F10 murine melanoma cells (IC(50)=12.8 uM). This chain is Figainin 2, found in Boana raniceps (Chaco tree frog).